Reading from the N-terminus, the 368-residue chain is (Iso)eugenol O-methyltransferase (368 aa).

Residues 1–2 (MG) constitute a propeptide that is removed on maturation. Residues S187, 211 to 212 (GG), D234, 254 to 255 (DM), and K268 each bind S-adenosyl-L-methionine. H272 serves as the catalytic Proton acceptor.

It belongs to the class I-like SAM-binding methyltransferase superfamily. Cation-independent O-methyltransferase family. COMT subfamily. Homodimer. As to expression, expressed in petals, style and stamens, but not in stigma, sepals, leaves or stem tissues.

It catalyses the reaction (E)-isoeugenol + S-adenosyl-L-methionine = (E)-isomethyleugenol + S-adenosyl-L-homocysteine + H(+). Its function is as follows. Catalyzes the methylation of the para-4-hydroxyl of both eugenol and (iso)eugenol to methyleugenol and isomethyleugenol, respectively. The resulting products are part of a complex mixture of low-molecular-weight volatile compounds emitted by the flowers to attract pollinators. In Clarkia breweri (Fairy fans), this protein is (Iso)eugenol O-methyltransferase (IEMT1).